The primary structure comprises 304 residues: Phosphoribosylaminoimidazole-succinocarboxamide synthase (304 aa).

Belongs to the SAICAR synthetase family.

The catalysed reaction is 5-amino-1-(5-phospho-D-ribosyl)imidazole-4-carboxylate + L-aspartate + ATP = (2S)-2-[5-amino-1-(5-phospho-beta-D-ribosyl)imidazole-4-carboxamido]succinate + ADP + phosphate + 2 H(+). It functions in the pathway purine metabolism; IMP biosynthesis via de novo pathway; 5-amino-1-(5-phospho-D-ribosyl)imidazole-4-carboxamide from 5-amino-1-(5-phospho-D-ribosyl)imidazole-4-carboxylate: step 1/2. The chain is Phosphoribosylaminoimidazole-succinocarboxamide synthase from Corynebacterium efficiens (strain DSM 44549 / YS-314 / AJ 12310 / JCM 11189 / NBRC 100395).